A 256-amino-acid polypeptide reads, in one-letter code: uncharacterized protein (256 aa).

This is an uncharacterized protein from Saccharomyces cerevisiae (strain ATCC 204508 / S288c) (Baker's yeast).